The primary structure comprises 263 residues: (2Z,6E)-farnesyl diphosphate synthase (263 aa).

Residue aspartate 40 is part of the active site. Residue aspartate 40 coordinates Mg(2+). Substrate is bound by residues glycine 41 to arginine 44, tryptophan 45, and serine 86 to glutamate 88. Catalysis depends on asparagine 89, which acts as the Proton acceptor. Residues arginine 92, arginine 212, and arginine 218–serine 220 each bind substrate. Position 231 (glutamate 231) interacts with Mg(2+).

It belongs to the UPP synthase family. Z-FPP synthase subfamily. In terms of assembly, homodimer. Mg(2+) serves as cofactor.

It is found in the cell membrane. It carries out the reaction isopentenyl diphosphate + (2E)-geranyl diphosphate = (2Z,6E)-farnesyl diphosphate + diphosphate. Its function is as follows. Catalyzes the condensation of only one isopentenyl pyrophosphate (IPP) unit in the cis configuration to E-geranyl diphosphate (E-GPP) generating the 15 carbon product (2Z,6E)-farnesyl diphosphate (Z-FPP or EZ-FPP). Z-FPP is the precursor of decaprenyl diphosphate, which has a central role in the biosynthesis of the mycobacterial cell wall. This chain is (2Z,6E)-farnesyl diphosphate synthase (uppS), found in Mycolicibacterium smegmatis (strain ATCC 700084 / mc(2)155) (Mycobacterium smegmatis).